Reading from the N-terminus, the 360-residue chain is Nicotinate-nucleotide--dimethylbenzimidazole phosphoribosyltransferase (360 aa).

Glutamate 327 acts as the Proton acceptor in catalysis.

The protein belongs to the CobT family.

The enzyme catalyses 5,6-dimethylbenzimidazole + nicotinate beta-D-ribonucleotide = alpha-ribazole 5'-phosphate + nicotinate + H(+). It participates in nucleoside biosynthesis; alpha-ribazole biosynthesis; alpha-ribazole from 5,6-dimethylbenzimidazole: step 1/2. In terms of biological role, catalyzes the synthesis of alpha-ribazole-5'-phosphate from nicotinate mononucleotide (NAMN) and 5,6-dimethylbenzimidazole (DMB). The protein is Nicotinate-nucleotide--dimethylbenzimidazole phosphoribosyltransferase of Shewanella baltica (strain OS223).